A 238-amino-acid chain; its full sequence is uncharacterized protein (238 aa).

To M.thermoautotrophicum MTH564.

This is an uncharacterized protein from Methanocaldococcus jannaschii (strain ATCC 43067 / DSM 2661 / JAL-1 / JCM 10045 / NBRC 100440) (Methanococcus jannaschii).